Consider the following 142-residue polypeptide: Centromere protein S (142 aa).

The tract at residues 107 to 142 (LKGKAKKKRKPEDESRSSRESMAEELDGAEELQSES) is disordered. The segment covering 116–128 (KPEDESRSSRESM) has biased composition (basic and acidic residues). Positions 129-142 (AEELDGAEELQSES) are enriched in acidic residues.

The protein belongs to the TAF9 family. CENP-S/MHF1 subfamily. As to quaternary structure, heterodimer with CENPX, sometimes called MHF; this interaction stabilizes both partners. MHF heterodimers can assemble to form tetrameric structures. MHF also coassemble with CENPT-CENPW heterodimers at centromeres to form the tetrameric CENP-T-W-S-X complex. Forms a discrete complex with FANCM and CENPX, called FANCM-MHF; this interaction, probably mediated by direct binding between CENPS and FANCM, leads to synergistic activation of double-stranded DNA binding and strongly stimulates FANCM-mediated DNA remodeling. Recruited by FANCM to the Fanconi anemia (FA) core complex, which consists of CENPS, CENPX, FANCA, FANCB, FANCC, FANCE, FANCF, FANCG, FANCL, FANCM, FAAP24 and FAAP100. The FA core complex associates with Bloom syndrome (BLM) complex, which consists of at least BLM, DNA topoisomerase 3-alpha (TOP3A), RMI1/BLAP75, RPA1/RPA70 and RPA2/RPA32. The super complex between FA and BLM is called BRAFT. Component of the CENPA-CAD complex, composed of CENPI, CENPK, CENPL, CENPO, CENPP, CENPQ, CENPR and CENPS. The CENPA-CAD complex is probably recruited on centromeres by the CENPA-NAC complex, at least composed of CENPA, CENPC, CENPH, CENPM, CENPN, CENPT and CENPU.

It localises to the nucleus. Its subcellular location is the chromosome. It is found in the centromere. The protein localises to the kinetochore. Functionally, DNA-binding component of the Fanconi anemia (FA) core complex. Required for the normal activation of the FA pathway, leading to monoubiquitination of the FANCI-FANCD2 complex in response to DNA damage, cellular resistance to DNA cross-linking drugs, and prevention of chromosomal breakage. In complex with CENPX (MHF heterodimer), crucial cofactor for FANCM in both binding and ATP-dependent remodeling of DNA. Stabilizes FANCM. In complex with CENPX and FANCM (but not other FANC proteins), rapidly recruited to blocked forks and promotes gene conversion at blocked replication forks. In complex with CENPT, CENPW and CENPX (CENP-T-W-S-X heterotetramer), involved in the formation of a functional kinetochore outer plate, which is essential for kinetochore-microtubule attachment and faithful mitotic progression. As a component of MHF and CENP-T-W-S-X complexes, binds DNA and bends it to form a nucleosome-like structure. DNA-binding function is fulfilled in the presence of CENPX, with the following preference for DNA substates: Holliday junction &gt; double-stranded &gt; splay arm &gt; single-stranded. Does not bind DNA on its own. This chain is Centromere protein S (Cenps), found in Mus musculus (Mouse).